We begin with the raw amino-acid sequence, 261 residues long: Hemin import ATP-binding protein HmuV (261 aa).

Residues 3–239 (LDAADITVKL…AILSQAYGCA (237 aa)) enclose the ABC transporter domain. 35–42 (GPNGSGKT) serves as a coordination point for ATP.

Belongs to the ABC transporter superfamily. Heme (hemin) importer (TC 3.A.1.14.5) family. The complex is composed of two ATP-binding proteins (HmuV), two transmembrane proteins (HmuU) and a solute-binding protein (HmuT).

It is found in the cell inner membrane. Its function is as follows. Part of the ABC transporter complex HmuTUV involved in hemin import. Responsible for energy coupling to the transport system. This chain is Hemin import ATP-binding protein HmuV, found in Roseobacter denitrificans (strain ATCC 33942 / OCh 114) (Erythrobacter sp. (strain OCh 114)).